The chain runs to 993 residues: MTDTVETIDYSKTLYLPQTDFPMRAGLPEKEPVLVKRWQDMDLYAKLRESAAGRTKYVLHDGPPYANGNIHIGHALNKILKDVITRSFQMRGYDSTYVPGWDCHGLPIEWKIEEQYRAKGKNKDEVPVNEFRKECREFAAHWITVQGGEFQRLGVIGDFKNPYTTMAFHAESRIAGELLKFALSGQLYRGSKPVMWSVVERTALAEAEIEYQDYESDTIWAKFPVANLVVANVVDGQPAELNPDLSDRSLDLLDAHVVIWTTTPWTIPGNRAVSYSPRVAYGLYEVTAAENAFGPEPGEKLIFADALAAESQAKAKITLKRLHHVSAEQLGNLVLSHPFKGLGGGYEFPVPMVAGDHVTDDAGTGFVHTAPGHGREDFDAWMDAAPQLRARGIDTVIPFTVDDAGFFTRDAPGFGPDREGGAARVIDDNGKKGNANQAVIDELIKRNALFARGRLKHSYPHSWRSKKPVIFRNTPQWFVYMDKDLGDGTTLRSRALKAIDDTRFVPAAGQNRIRAMIEERPDWVLSRQRAWGVPIAVFADEDGNVLKDEAVNQRIMDAFEEEGADAWFAAGAKERFLGNHDASKWKQVMDILDVWFDSGSTHVFTLEDRPDLKWPADVYLEGSDQHRGWFHSSLLESCGTRGRAPYDTVVTHGFTMDEDGRKMSKSLGNTVVPQDVIKQSGADILRLWVVTTDYWEDQRLGKNVLQTNIDAYRKLRNTIRWMLGTLAHDDGETVPLEAMPELERLMLHRLAELDEVVRQGYDAFEFKRITRALVDFMVVELSAFYFDIRKDALYCDAPSSVKRKASVQVVRHLFDCLVKWLAPMLPFTMEEAWLDRHPDAVSVHLDQFPEIPADWKNEALAEKWRKVRQVRRVVTGALEIARAQKVIGSSLEAVPVVTINDAALEAAIADVDMAEMAITSDLVIAHGQAPEGAFTLDDVRGVAVVVEKAEDRGLVKCARSWRYTADVGQDPAFPDVSARDAAVLHELKALGRL.

The 'HIGH' region motif lies at 64–74; sequence PYANGNIHIGH. E621 is an L-isoleucyl-5'-AMP binding site. Positions 662 to 666 match the 'KMSKS' region motif; it reads KMSKS. K665 serves as a coordination point for ATP.

It belongs to the class-I aminoacyl-tRNA synthetase family. IleS type 1 subfamily. As to quaternary structure, monomer.

Its subcellular location is the cytoplasm. The enzyme catalyses tRNA(Ile) + L-isoleucine + ATP = L-isoleucyl-tRNA(Ile) + AMP + diphosphate. Functionally, catalyzes the attachment of isoleucine to tRNA(Ile). As IleRS can inadvertently accommodate and process structurally similar amino acids such as valine, to avoid such errors it has two additional distinct tRNA(Ile)-dependent editing activities. One activity is designated as 'pretransfer' editing and involves the hydrolysis of activated Val-AMP. The other activity is designated 'posttransfer' editing and involves deacylation of mischarged Val-tRNA(Ile). The chain is Isoleucine--tRNA ligase from Mesorhizobium japonicum (strain LMG 29417 / CECT 9101 / MAFF 303099) (Mesorhizobium loti (strain MAFF 303099)).